The chain runs to 356 residues: Tyrosine recombinase XerS (356 aa).

The 106-residue stretch at 16-121 (VMPWYVLDYY…ALSSLYKYLT (106 aa)) folds into the Core-binding (CB) domain. Residues 169-354 (AFLDYVDKEY…VNDEQKNALD (186 aa)) enclose the Tyr recombinase domain. Residues Arg-210, Lys-234, His-306, Arg-309, and His-332 contribute to the active site. Catalysis depends on Tyr-341, which acts as the O-(3'-phospho-DNA)-tyrosine intermediate.

It belongs to the 'phage' integrase family. XerS subfamily.

The protein resides in the cytoplasm. FtsK is required for recombination. Functionally, site-specific tyrosine recombinase, which acts by catalyzing the cutting and rejoining of the recombining DNA molecules. Essential to convert dimers of the bacterial chromosome into monomers to permit their segregation at cell division. In Streptococcus pyogenes serotype M28 (strain MGAS6180), this protein is Tyrosine recombinase XerS.